The primary structure comprises 791 residues: MRSMAQHLVTKIVTRRGLLMSKGMCPRMGRLCAVSIFCAFSGIQDASCVSEPAPPQDLERNHPGVAARYLQEGRWQEALSQAEQGVASAPQIADFLFIAARASYALQQPRARALQWMARAVAKDMQWCVYDIEEVRLFYARLCVDTLQHARALELLATAEQVSADADWLRARARYGLGQVEHAQELIEKALERWALDARFAKLFFAQERSRRPSSRSKKIADSILSRLSVWQEQDPSLLVEAALFEPRTNMAFRYLQTYFTLRPLDAPGESSAQSSYEQSTRAGDSAPEQELYARAQSIVLGLQYGVLDEQRAMEMFCTLNSPLAVPAVDPTDDVSSFGVHASSVSSSTPLQRVVVLYADLLHEFSRLLASRPIRARFARFLAEFEGVLYTDENRDGIVSARVFFKAGRPSRAQFDTNQDGILEYEVYANDGAPTCVHTMHSTQKTELSRASVFPIPQNIAAHDHERAAERWIAPRVSLPADNGVEGETQARVPLTQQGYRVCYDRYPEVHQVGWEDKTYVLRPRALRWQPVRMQSLDLARDLEGVRSHDFFTMVLTNEPLPTEQQITVSSLYYEKPDSLFERARVRTYLDEGLPLFSETHVGSRFRARTHYVDGRATRRDSDRDDDGFFETREYYNAQGAVRALSVDVHKDRSFAYQEEYGAKGQKVQKWYGRGRVTISHTELPTGHARTEWLHPVTGRHVTVDFVQGVPKRLLVDGEVHALTKDPRNAALYWVRRIPRNGDEVGQRIVESFRAATSPVVSEYFRTGGSVVRAVRSGGVVFAEELEPGKE.

A disordered region spans residues 267 to 288; it reads APGESSAQSSYEQSTRAGDSAP. Polar residues predominate over residues 271–283; it reads SSAQSSYEQSTRA.

This is an uncharacterized protein from Treponema pallidum (strain Nichols).